Here is a 333-residue protein sequence, read N- to C-terminus: tRNA(Ile)-lysidine synthase (333 aa).

ATP is bound at residue 25–30 (SGGPDS).

Belongs to the tRNA(Ile)-lysidine synthase family.

The protein localises to the cytoplasm. The enzyme catalyses cytidine(34) in tRNA(Ile2) + L-lysine + ATP = lysidine(34) in tRNA(Ile2) + AMP + diphosphate + H(+). Ligates lysine onto the cytidine present at position 34 of the AUA codon-specific tRNA(Ile) that contains the anticodon CAU, in an ATP-dependent manner. Cytidine is converted to lysidine, thus changing the amino acid specificity of the tRNA from methionine to isoleucine. In Ureaplasma parvum serovar 3 (strain ATCC 700970), this protein is tRNA(Ile)-lysidine synthase.